Consider the following 389-residue polypeptide: Succinate--CoA ligase [ADP-forming] subunit beta (389 aa).

ATP contacts are provided by residues Lys46, 53 to 55 (GRG), Glu99, Cys102, and Glu107. Mg(2+) is bound by residues Asn199 and Asp213. Residues Asn264 and 321-323 (GIV) contribute to the substrate site.

Belongs to the succinate/malate CoA ligase beta subunit family. Heterotetramer of two alpha and two beta subunits. Mg(2+) is required as a cofactor.

The catalysed reaction is succinate + ATP + CoA = succinyl-CoA + ADP + phosphate. The enzyme catalyses GTP + succinate + CoA = succinyl-CoA + GDP + phosphate. The protein operates within carbohydrate metabolism; tricarboxylic acid cycle; succinate from succinyl-CoA (ligase route): step 1/1. Its function is as follows. Succinyl-CoA synthetase functions in the citric acid cycle (TCA), coupling the hydrolysis of succinyl-CoA to the synthesis of either ATP or GTP and thus represents the only step of substrate-level phosphorylation in the TCA. The beta subunit provides nucleotide specificity of the enzyme and binds the substrate succinate, while the binding sites for coenzyme A and phosphate are found in the alpha subunit. This chain is Succinate--CoA ligase [ADP-forming] subunit beta, found in Haemophilus influenzae (strain PittEE).